A 1468-amino-acid chain; its full sequence is DNA polymerase III PolC-type (1468 aa).

Residues 197 to 217 are disordered; it reads QKSLEDSAPPSEEVTPTQNYD. The 157-residue stretch at 430–586 folds into the Exonuclease domain; the sequence is YVVFDVETTG…YDAEATGRLL (157 aa).

Belongs to the DNA polymerase type-C family. PolC subfamily.

It is found in the cytoplasm. It catalyses the reaction DNA(n) + a 2'-deoxyribonucleoside 5'-triphosphate = DNA(n+1) + diphosphate. Required for replicative DNA synthesis. This DNA polymerase also exhibits 3' to 5' exonuclease activity. The polypeptide is DNA polymerase III PolC-type (Streptococcus agalactiae serotype III (strain NEM316)).